Consider the following 993-residue polypeptide: Chromosome transmission fidelity protein 18 homolog (993 aa).

The tract at residues 26-72 (PDEFNAYDGPSTSKQAAEKQKENRAPVAALRDSTRLGNSTLGSPQLS) is disordered. A compositionally biased stretch (polar residues) spans 60–72 (RLGNSTLGSPQLS). Residue 427–434 (GPPGLGKT) participates in ATP binding. Positions 892–913 (AAPKGGAPSAPAAKKKTSGAAA) are disordered. The segment covering 894–913 (PKGGAPSAPAAKKKTSGAAA) has biased composition (low complexity).

Belongs to the activator 1 small subunits family. CTF18 subfamily. Component of the CTF18-RFC complex.

The protein localises to the nucleus. In terms of biological role, chromosome cohesion factor involved in sister chromatid cohesion and fidelity of chromosome transmission. Component of one of the cell nuclear antigen loader complexes, CTF18-replication factor C (CTF18-RFC). The CTF18-RFC complex catalyzes the ATP-dependent loading of PCNA onto primed and gapped DNA and has weak ATPase activity. The CTF18-RFC complex catalyzes the ATP-dependent loading of PCNA onto primed and gapped DNA. This chain is Chromosome transmission fidelity protein 18 homolog, found in Drosophila melanogaster (Fruit fly).